The primary structure comprises 295 residues: Putative aquaporin-12A (295 aa).

A helical transmembrane segment spans residues methionine 1–alanine 21. At arginine 22–aspartate 54 the chain is on the extracellular side. The helical transmembrane segment at phenylalanine 55–leucine 75 threads the bilayer. Topologically, residues aspartate 76–threonine 99 are cytoplasmic. Residues glycine 77–cysteine 114 constitute an intramembrane region (discontinuously helical). The NPA 1 motif lies at asparagine 81–threonine 83. A helical transmembrane segment spans residues leucine 100–serine 126. The Extracellular portion of the chain corresponds to aspartate 127 to threonine 145. The chain crosses the membrane as a helical span at residues serine 146 to leucine 166. Over histidine 167 to proline 178 the chain is Cytoplasmic. Residues alanine 179–phenylalanine 199 traverse the membrane as a helical segment. The discontinuously helical intramembrane region spans threonine 195–serine 206. The short motif at asparagine 200–alanine 202 is the NPA 2 element. The Extracellular segment spans residues asparagine 200 to threonine 215. The helical transmembrane segment at leucine 216–leucine 236 threads the bilayer. Over leucine 237–serine 295 the chain is Cytoplasmic. A disordered region spans residues lysine 257–serine 295.

Belongs to the MIP/aquaporin (TC 1.A.8) family. AQP11/AQP12 subfamily. Homotetramer; each monomer provides an independent water pore. Restricted to the pancreas.

The protein localises to the membrane. The enzyme catalyses H2O(in) = H2O(out). Its function is as follows. Putative aquaporin. Could form homotetrameric transmembrane channels, with each monomer independently mediating water transport across the plasma membrane along its osmotic gradient. This chain is Putative aquaporin-12A, found in Homo sapiens (Human).